A 333-amino-acid polypeptide reads, in one-letter code: Taste receptor type 2 member 38 (333 aa).

Over 1–17 (MLTLTRIRTVSYEVRST) the chain is Extracellular. A helical transmembrane segment spans residues 18-38 (FLFISVLEFAVGFLTNAFVFL). The Cytoplasmic segment spans residues 39-55 (VNFWDVVKRQPLSNSDC). Residues 56-76 (VLLCLSISRLFLHGLLFLSAI) form a helical membrane-spanning segment. The Extracellular portion of the chain corresponds to 77-94 (QLTHFQKLSEPLNHSYQA). Residues 95 to 115 (IIMLWMIANQANLWLAACLSL) form a helical membrane-spanning segment. The Cytoplasmic segment spans residues 116 to 142 (LYCSKLIRFSHTFLICLASWVSRKISQ). A helical membrane pass occupies residues 143–163 (MLLGIILCSCICTVLCVWCFF). Over 164-190 (SRPHFTVTTVLFMNNNTRLNWQIKDLN) the chain is Extracellular. A glycan (N-linked (GlcNAc...) asparagine) is linked at N178. The chain crosses the membrane as a helical span at residues 191–211 (LFYSFLFCYLWSVPPFLLFLV). The Cytoplasmic portion of the chain corresponds to 212–251 (SSGMLTVSLGRHMRTMKVYIRDSRDPSLEAHIKALKSLVS). The chain crosses the membrane as a helical span at residues 252–272 (FFCFFVISSCAAFISVPLLIL). The Extracellular segment spans residues 273-276 (WRDK). Residues 277–297 (IGVMVCVGIMAACPSGHAAVL) form a helical membrane-spanning segment. At 298-333 (ISGNAKLRRAVTTILLWAQSSLKVRADHKADSRTPC) the chain is on the cytoplasmic side.

The protein belongs to the G-protein coupled receptor T2R family.

It localises to the membrane. Functionally, receptor that may play a role in the perception of bitterness and is gustducin-linked. May play a role in sensing the chemical composition of the gastrointestinal content. The activity of this receptor may stimulate alpha gustducin, mediate PLC-beta-2 activation and lead to the gating of TRPM5. The polypeptide is Taste receptor type 2 member 38 (TAS2R38) (Gorilla gorilla gorilla (Western lowland gorilla)).